Consider the following 329-residue polypeptide: Intradiol ring-cleavage dioxygenase hqdA (329 aa).

The Fe cation site is built by Y167, Y201, H225, and H227.

Belongs to the intradiol ring-cleavage dioxygenase family. In terms of assembly, homodimer. The cofactor is Fe(3+).

The enzyme catalyses catechol + O2 = cis,cis-muconate + 2 H(+). It carries out the reaction benzene-1,2,4-triol + O2 = maleylacetate + 2 H(+). In terms of biological role, intradiol ring-cleavage dioxygenase involved in an alternative pathway to the protocatechuic acid pathway since it is active on hydroxyquinol and catechol but not on protocatechuic acid. The polypeptide is Intradiol ring-cleavage dioxygenase hqdA (Aspergillus niger (strain ATCC MYA-4892 / CBS 513.88 / FGSC A1513)).